We begin with the raw amino-acid sequence, 248 residues long: 5'-nucleotidase SurE (248 aa).

Positions 8, 9, 39, and 91 each coordinate a divalent metal cation.

The protein belongs to the SurE nucleotidase family. The cofactor is a divalent metal cation.

The protein resides in the cytoplasm. It catalyses the reaction a ribonucleoside 5'-phosphate + H2O = a ribonucleoside + phosphate. In terms of biological role, nucleotidase that shows phosphatase activity on nucleoside 5'-monophosphates. In Neisseria meningitidis serogroup B (strain ATCC BAA-335 / MC58), this protein is 5'-nucleotidase SurE.